The chain runs to 366 residues: ATP-dependent 6-phosphofructokinase 2 (366 aa).

Residues glycine 15, 78–79, and 119–122 contribute to the ATP site; these read KD and GDGT. A Mg(2+)-binding site is contributed by aspartate 120. Substrate contacts are provided by residues 142 to 144, arginine 179, 186 to 188, glutamate 239, arginine 284, and 290 to 293; these read TID, MGR, and HIQR. Residue aspartate 144 is the Proton acceptor of the active site.

It belongs to the phosphofructokinase type A (PFKA) family. Mixed-substrate PFK group III subfamily. In terms of assembly, homodimer or homotetramer. Requires Mg(2+) as cofactor.

It is found in the cytoplasm. It carries out the reaction beta-D-fructose 6-phosphate + ATP = beta-D-fructose 1,6-bisphosphate + ADP + H(+). The protein operates within carbohydrate degradation; glycolysis; D-glyceraldehyde 3-phosphate and glycerone phosphate from D-glucose: step 3/4. With respect to regulation, subject to allosteric activation by ADP and other diphosphonucleosides, and inhibition by phosphoenolpyruvate. In terms of biological role, catalyzes the phosphorylation of D-fructose 6-phosphate to fructose 1,6-bisphosphate by ATP, the first committing step of glycolysis. In Clostridium perfringens (strain 13 / Type A), this protein is ATP-dependent 6-phosphofructokinase 2.